A 256-amino-acid chain; its full sequence is uncharacterized protein (256 aa).

It belongs to the metallo-beta-lactamase superfamily.

This is an uncharacterized protein from Methanocaldococcus jannaschii (strain ATCC 43067 / DSM 2661 / JAL-1 / JCM 10045 / NBRC 100440) (Methanococcus jannaschii).